The following is a 369-amino-acid chain: Protein RecA (369 aa).

Position 66–73 (66–73 (GPESSGKT)) interacts with ATP. The interval 328–369 (GIDAESLEEKEDPEKVKEQRAKKAAPGEEKPAEPASPEKTDK) is disordered. Residues 339 to 369 (DPEKVKEQRAKKAAPGEEKPAEPASPEKTDK) are compositionally biased toward basic and acidic residues.

The protein belongs to the RecA family.

It is found in the cytoplasm. Functionally, can catalyze the hydrolysis of ATP in the presence of single-stranded DNA, the ATP-dependent uptake of single-stranded DNA by duplex DNA, and the ATP-dependent hybridization of homologous single-stranded DNAs. It interacts with LexA causing its activation and leading to its autocatalytic cleavage. This chain is Protein RecA, found in Lactobacillus delbrueckii subsp. bulgaricus (strain ATCC BAA-365 / Lb-18).